The following is a 316-amino-acid chain: ATP synthase gamma chain (316 aa).

The protein belongs to the ATPase gamma chain family. As to quaternary structure, F-type ATPases have 2 components, CF(1) - the catalytic core - and CF(0) - the membrane proton channel. CF(1) has five subunits: alpha(3), beta(3), gamma(1), delta(1), epsilon(1). CF(0) has three main subunits: a, b and c.

The protein localises to the cellular thylakoid membrane. In terms of biological role, produces ATP from ADP in the presence of a proton gradient across the membrane. The gamma chain is believed to be important in regulating ATPase activity and the flow of protons through the CF(0) complex. This Prochlorococcus marinus (strain MIT 9313) protein is ATP synthase gamma chain.